Here is a 129-residue protein sequence, read N- to C-terminus: Small ribosomal subunit protein uS11 (129 aa).

It belongs to the universal ribosomal protein uS11 family. Part of the 30S ribosomal subunit. Interacts with proteins S7 and S18. Binds to IF-3.

Its function is as follows. Located on the platform of the 30S subunit, it bridges several disparate RNA helices of the 16S rRNA. Forms part of the Shine-Dalgarno cleft in the 70S ribosome. The polypeptide is Small ribosomal subunit protein uS11 (Erythrobacter litoralis (strain HTCC2594)).